Reading from the N-terminus, the 271-residue chain is L-aspartate dehydrogenase (271 aa).

Alanine 124 and asparagine 192 together coordinate NAD(+). The active site involves histidine 222.

It belongs to the L-aspartate dehydrogenase family.

The catalysed reaction is L-aspartate + NADP(+) + H2O = oxaloacetate + NH4(+) + NADPH + H(+). It carries out the reaction L-aspartate + NAD(+) + H2O = oxaloacetate + NH4(+) + NADH + H(+). Its pathway is cofactor biosynthesis; NAD(+) biosynthesis; iminoaspartate from L-aspartate (dehydrogenase route): step 1/1. In terms of biological role, specifically catalyzes the NAD or NADP-dependent dehydrogenation of L-aspartate to iminoaspartate. The protein is L-aspartate dehydrogenase of Methanosarcina barkeri (strain Fusaro / DSM 804).